A 316-amino-acid polypeptide reads, in one-letter code: Probable thioesterase lcsE (316 aa).

It belongs to the AMT4 thioesterase family.

It participates in secondary metabolite biosynthesis. In terms of biological role, probable thioesterase; part of the gene cluster that mediates the biosynthesis of the lipopeptide antibiotics leucinostatins that show extensive biological activities, including antimalarial, antiviral, antibacterial, antifungal, and antitumor activities, as well as phytotoxic. Leucinostatin A contains nine amino acid residues, including the unusual amino acid 4-methyl-L-proline (MePro), 2-amino-6-hydroxy-4-methyl-8-oxodecanoic acid (AHyMeOA), 3-hydroxyleucine (HyLeu), alpha-aminoisobutyric acid (AIB), beta-Ala, a 4-methylhex-2-enoic acid at the N-terminus as well as a N1,N1-dimethylpropane-1,2-diamine (DPD) at the C-terminus. The biosynthesis of leucinostatins is probably initiated with the assembly of 4-methylhex-2-enoic acid by a reducing PKS. Two reducing polyketide synthases, lcsB and lcsC, have been identified in the cluster and it is not clear which is the one that assembles 4-methylhex-2-enoic acid since both contain KS, AT, DH, cMT, ER, KR and ACP domains. The polyketide residue might be transferred to the NRPS lcsA, mediated by two additional enzymes, the acyl-CoA ligase lcsD and the thioesterase lcsE. The linear polyketide carboxylic acid, which is released from PKS, is converted to a CoA thioester by lcsD, and then lcsE hydrolyzes the thiol bond and shuttles the polyketide intermediate to lcsA. The C domain of the first module catalyzed the condensation of 4-methylhex-2-enoic acid and MePro carried by domain A1, followed by successive condensations of nine amino acids to trigger the elongation of the linear peptide. A5 and A6 domains of lcsA are proposed to incorporate leucine, A2 AHyMeOA, and A3 incorporates HyLeu. A4, A7 and A8 incorporate AIB. The AHyMeOA in leucinostatin A activated by the A2 might be produced by the second PKS (lcsB or lcsC) present within the cluster. The MePro is probably produced via leucine cyclization and may originate from a separate pathway, independent of the cluster. Another nonproteinogenic amino acid, beta-Ala, could be produced by an aspartic acid decarboxylase also localized outside of the cluster. Two candidates are VFPBJ_01400 and VFPBJ_10476. The final peptide scaffold may be released by the NAD(P)H-dependent thioester reductase (TE) at the C-terminal region of lcsA. Transamination of the lcsA product by the transaminase lcsP may produce DPD at the C-terminus. Further hydroxylation steps performed alternatively by the cytochrome P450 monooxygenases lcsI, lcsK and lcsN then yield the non-methylated leucinostatins precursor. It is also possible that leucines can be hydroxylated prior to their incorporation into the peptide. Varying extents of methylation then lead to the formation of leucinostatins A and B. The sequence is that of Probable thioesterase lcsE from Purpureocillium lilacinum (Paecilomyces lilacinus).